The chain runs to 254 residues: Ribosomal RNA small subunit methyltransferase A (254 aa).

6 residues coordinate S-adenosyl-L-methionine: N12, L14, G38, E59, D83, and N100.

Belongs to the class I-like SAM-binding methyltransferase superfamily. rRNA adenine N(6)-methyltransferase family. RsmA subfamily.

Its subcellular location is the cytoplasm. The enzyme catalyses adenosine(1518)/adenosine(1519) in 16S rRNA + 4 S-adenosyl-L-methionine = N(6)-dimethyladenosine(1518)/N(6)-dimethyladenosine(1519) in 16S rRNA + 4 S-adenosyl-L-homocysteine + 4 H(+). Specifically dimethylates two adjacent adenosines (A1518 and A1519) in the loop of a conserved hairpin near the 3'-end of 16S rRNA in the 30S particle. May play a critical role in biogenesis of 30S subunits. This chain is Ribosomal RNA small subunit methyltransferase A, found in Mycoplasma mobile (strain ATCC 43663 / 163K / NCTC 11711) (Mesomycoplasma mobile).